The primary structure comprises 265 residues: Phosphatidylglycerol--prolipoprotein diacylglyceryl transferase (265 aa).

Helical transmembrane passes span 17–37, 57–77, 89–109, 127–147, 176–196, 201–218, and 233–253; these read VAVRWYGLMYLLAFVLFVVLG, LLLYGVLGVIIGGRLGEVLFY, ILAVWKGGMSFHGGFLGVLVA, FIAPLVPTGLAAGRIGNFING, QLYQAAGEGLLLFAIVWVFAA, LRAVSAVFLIGYGSLRFV, and LVPGLSTAQWLCVPMVVVGLA. R140 contacts a 1,2-diacyl-sn-glycero-3-phospho-(1'-sn-glycerol).

This sequence belongs to the Lgt family.

It is found in the cell inner membrane. It carries out the reaction L-cysteinyl-[prolipoprotein] + a 1,2-diacyl-sn-glycero-3-phospho-(1'-sn-glycerol) = an S-1,2-diacyl-sn-glyceryl-L-cysteinyl-[prolipoprotein] + sn-glycerol 1-phosphate + H(+). Its pathway is protein modification; lipoprotein biosynthesis (diacylglyceryl transfer). In terms of biological role, catalyzes the transfer of the diacylglyceryl group from phosphatidylglycerol to the sulfhydryl group of the N-terminal cysteine of a prolipoprotein, the first step in the formation of mature lipoproteins. The sequence is that of Phosphatidylglycerol--prolipoprotein diacylglyceryl transferase from Azoarcus sp. (strain BH72).